The primary structure comprises 784 residues: ent-copalyl diphosphate synthase 2, chloroplastic (784 aa).

A chloroplast-targeting transit peptide spans 1 to 57 (MSMTLFASVTRPGLPGPTALRFPETRHLFHSVTAFAASFSPSKSSVGSSQCNATTPP). Position 242 (Lys242) interacts with substrate. Residues Asp379 and Asp381 each contribute to the Mg(2+) site. The DXDD motif signature appears at 379–382 (DIDD). Residue Lys466 participates in substrate binding.

Belongs to the terpene synthase family. It depends on Mg(2+) as a cofactor. Present in both leaves and flowers.

The protein localises to the plastid. It localises to the chloroplast. Its pathway is plant hormone biosynthesis; gibberellin biosynthesis. It functions in the pathway secondary metabolite biosynthesis; terpenoid biosynthesis. Functionally, involved in the biosynthesis of labdane-type diterpenoid including marrubiin and other labdane-related furanoid diterpenoids with potential applications as anti-diabetics, analgesics or vasorelaxants. May be involved in the conversion of geranylgeranyl diphosphate (GGPP) to ent-copalyl diphosphate (ent-CPP) and 8-hydroxycopalyl diphosphate (LPP, labda-13-en-8-ol diphosphate). The polypeptide is ent-copalyl diphosphate synthase 2, chloroplastic (Marrubium vulgare (White horehound)).